Reading from the N-terminus, the 77-residue chain is Acyl carrier protein (77 aa).

The 76-residue stretch at 2–77 folds into the Carrier domain; that stretch reads SSIDKRIKEI…DAIDYITDHT (76 aa). The residue at position 37 (serine 37) is an O-(pantetheine 4'-phosphoryl)serine.

This sequence belongs to the acyl carrier protein (ACP) family. In terms of processing, 4'-phosphopantetheine is transferred from CoA to a specific serine of apo-ACP by AcpS. This modification is essential for activity because fatty acids are bound in thioester linkage to the sulfhydryl of the prosthetic group.

The protein localises to the cytoplasm. The protein operates within lipid metabolism; fatty acid biosynthesis. Carrier of the growing fatty acid chain in fatty acid biosynthesis. The polypeptide is Acyl carrier protein (Geotalea daltonii (strain DSM 22248 / JCM 15807 / FRC-32) (Geobacter daltonii)).